The following is a 775-amino-acid chain: Ankyrin repeat and EF-hand domain-containing protein 1 (775 aa).

ANK repeat units follow at residues 47 to 76 (DGLS…HPDV), 184 to 213 (TGRT…EVNA), 217 to 246 (DRHH…DMGL), 250 to 279 (DGNT…DLKW), 524 to 553 (TYKT…NVNA), 557 to 586 (FLWT…SIDA), 590 to 619 (NNST…KFQI), and 623 to 652 (KGHA…NLPK).

The chain is Ankyrin repeat and EF-hand domain-containing protein 1 (Ankef1) from Mus musculus (Mouse).